The following is a 701-amino-acid chain: Low-density lipoprotein receptor-related protein 12 (701 aa).

Residues Gly1–Arg334 lie on the Extracellular side of the membrane. 2 consecutive LDL-receptor class A domains span residues Asn7 to Ala43 and Pro56 to Asp97. 7 disulfides stabilise this stretch: Cys8/Cys20, Cys15/Cys33, Cys27/Cys42, Cys57/Cys74, Cys64/Cys87, Cys81/Cys96, and Cys101/Cys127. Positions Cys101–Asp214 constitute a CUB domain. N-linked (GlcNAc...) asparagine glycosylation is found at Asn126 and Asn208. 3 LDL-receptor class A domains span residues Phe216–Thr253, Met254–Phe291, and Phe292–Pro328. Disulfide bonds link Cys217–Cys230, Cys224–Cys243, Cys237–Cys252, Cys255–Cys268, Cys262–Cys281, Cys275–Cys290, Cys293–Cys305, Cys300–Cys318, and Cys312–Cys327. N-linked (GlcNAc...) asparagine glycosylation is present at Asn251. A glycan (N-linked (GlcNAc...) asparagine) is linked at Asn283. The chain crosses the membrane as a helical span at residues Val335–Gly355. Over Cys356 to Cys701 the chain is Cytoplasmic. Disordered regions lie at residues Ala465–Lys520, Ala535–Arg565, Ser590–Asp612, and Asp643–Asp665. 2 stretches are compositionally biased toward polar residues: residues Ser590–Leu599 and Asp643–Asn656.

It belongs to the LDLR family. May interact with RACK1, ZFYVE9 and NMRK2.

It localises to the membrane. It is found in the coated pit. Its function is as follows. Probable receptor, which may be involved in the internalization of lipophilic molecules and/or signal transduction. May act as a tumor suppressor. The protein is Low-density lipoprotein receptor-related protein 12 (LRP12) of Macaca fascicularis (Crab-eating macaque).